The chain runs to 392 residues: Histidinol-phosphate aminotransferase (392 aa).

A disordered region spans residues 1–24 (MSAVLKDPIPAPGRPESTRPEPRP). Lysine 236 is subject to N6-(pyridoxal phosphate)lysine.

Belongs to the class-II pyridoxal-phosphate-dependent aminotransferase family. Histidinol-phosphate aminotransferase subfamily. In terms of assembly, homodimer. Pyridoxal 5'-phosphate serves as cofactor.

The enzyme catalyses L-histidinol phosphate + 2-oxoglutarate = 3-(imidazol-4-yl)-2-oxopropyl phosphate + L-glutamate. It functions in the pathway amino-acid biosynthesis; L-histidine biosynthesis; L-histidine from 5-phospho-alpha-D-ribose 1-diphosphate: step 7/9. The chain is Histidinol-phosphate aminotransferase from Xanthobacter autotrophicus (strain ATCC BAA-1158 / Py2).